The following is an 833-amino-acid chain: DNA gyrase subunit A (833 aa).

In terms of domain architecture, Topo IIA-type catalytic spans 34–500 (LPDVRDGLKP…AGDVRDIEDI (467 aa)). Tyr-122 acts as the O-(5'-phospho-DNA)-tyrosine intermediate in catalysis. The GyrA-box signature appears at 527–533 (QKRGGQG).

It belongs to the type II topoisomerase GyrA/ParC subunit family. Heterotetramer, composed of two GyrA and two GyrB chains. In the heterotetramer, GyrA contains the active site tyrosine that forms a transient covalent intermediate with DNA, while GyrB binds cofactors and catalyzes ATP hydrolysis.

Its subcellular location is the cytoplasm. It catalyses the reaction ATP-dependent breakage, passage and rejoining of double-stranded DNA.. Functionally, a type II topoisomerase that negatively supercoils closed circular double-stranded (ds) DNA in an ATP-dependent manner to modulate DNA topology and maintain chromosomes in an underwound state. Negative supercoiling favors strand separation, and DNA replication, transcription, recombination and repair, all of which involve strand separation. Also able to catalyze the interconversion of other topological isomers of dsDNA rings, including catenanes and knotted rings. Type II topoisomerases break and join 2 DNA strands simultaneously in an ATP-dependent manner. The sequence is that of DNA gyrase subunit A from Chlamydia muridarum (strain MoPn / Nigg).